The chain runs to 199 residues: Phosphatidylethanolamine N-methyltransferase (199 aa).

Topologically, residues 1 to 12 are lumenal; that stretch reads MSWLLGYMDPTE. Residues 13–33 constitute an intramembrane region (helical); that stretch reads PSFVAAVITIVFNPLFWNVVA. Over 34–45 the chain is Lumenal; that stretch reads RWEQRTRKLSRA. Residues 46–66 form a helical membrane-spanning segment; the sequence is FGSPHLACYSLGICILLLNIL. Topologically, residues 67–93 are cytoplasmic; that stretch reads RSHCFTQAMMSQPKMEGLDNHTTYFLG. A helical membrane pass occupies residues 94 to 114; sequence LAFLGWGFVFVLSSFYALGFT. 98–100 contacts S-adenosyl-L-methionine; that stretch reads GWG. At 115–157 the chain is on the lumenal side; it reads GTFLGDYFGILKESRVTTFPFSVLDNPMYWGSTANYLGWALMH. The chain crosses the membrane as a helical span at residues 158–178; the sequence is ASPTGLLLTVLVAIVYVVALL. Over 179–199 the chain is Cytoplasmic; sequence YEEPFTAEIYRQKATRLHKRS. Position 180–181 (180–181) interacts with S-adenosyl-L-methionine; that stretch reads EE.

This sequence belongs to the class VI-like SAM-binding methyltransferase superfamily. PEMT/PEM2 methyltransferase family. In terms of tissue distribution, expressed in liver (at protein level).

It localises to the endoplasmic reticulum membrane. The protein resides in the mitochondrion membrane. The catalysed reaction is a 1,2-diacyl-sn-glycero-3-phospho-N-methylethanolamine + S-adenosyl-L-methionine = a 1,2-diacyl-sn-glycero-3-phospho-N,N-dimethylethanolamine + S-adenosyl-L-homocysteine + H(+). It catalyses the reaction a 1,2-diacyl-sn-glycero-3-phospho-N,N-dimethylethanolamine + S-adenosyl-L-methionine = a 1,2-diacyl-sn-glycero-3-phosphocholine + S-adenosyl-L-homocysteine + H(+). The enzyme catalyses a 1,2-diacyl-sn-glycero-3-phosphoethanolamine + S-adenosyl-L-methionine = a 1,2-diacyl-sn-glycero-3-phospho-N-methylethanolamine + S-adenosyl-L-homocysteine + H(+). It carries out the reaction 1,2-di-(9Z-octadecenoyl)-sn-glycero-3-phosphoethanolamine + S-adenosyl-L-methionine = 1,2-di-(9Z-octadecenoyl)-sn-glycero-3-phospho-N-methylethanolamine + S-adenosyl-L-homocysteine + H(+). The catalysed reaction is 1,2-di-(9Z-octadecenoyl)-sn-glycero-3-phospho-N-methylethanolamine + S-adenosyl-L-methionine = 1,2-di-(9Z-octadecenoyl)-sn-glycero-3-phospho-N,N-dimethylethanolamine + S-adenosyl-L-homocysteine + H(+). It catalyses the reaction 1,2-di-(9Z-octadecenoyl)-sn-glycero-3-phospho-N,N-dimethylethanolamine + S-adenosyl-L-methionine = 1,2-di-(9Z-octadecenoyl)-sn-glycero-3-phosphocholine + S-adenosyl-L-homocysteine + H(+). The enzyme catalyses 1,2-di-(9Z,12Z-octadecadienoyl)-sn-glycero-3-phosphoethanolamine + S-adenosyl-L-methionine = 1,2-di-(9Z,12Z-octadecadienoyl)-sn-glycero-3-phospho-N-methylethanolamine + S-adenosyl-L-homocysteine + H(+). It carries out the reaction 1,2-di-(9Z,12Z-octadecadienoyl)-sn-glycero-3-phospho-N-methylethanolamine + S-adenosyl-L-methionine = 1,2-di-(9Z,12Z-octadecadienoyl)-sn-glycero-3-phospho-N,N-dimethylethanolamine + S-adenosyl-L-homocysteine + H(+). The catalysed reaction is 1,2-di-(9Z,12Z-octadecadienoyl)-sn-glycero-3-phospho-N,N-dimethylethanolamine + S-adenosyl-L-methionine = 1,2-di-(9Z,12Z-octadecadienoyl)-sn-glycero-3-phosphocholine + S-adenosyl-L-homocysteine + H(+). It catalyses the reaction 1,2-di-(9Z,12Z,15Z-octadecatrienoyl)-sn-glycero-3-phosphoethanolamine + S-adenosyl-L-methionine = 1,2-di-(9Z,12Z,15Z-octadecatrienoyl)-sn-glycero-3-phospho-N-methylethanolamine + S-adenosyl-L-homocysteine + H(+). The enzyme catalyses 1,2-di-(9Z,12Z,15Z-octadecatrienoyl)-sn-glycero-3-phospho-N-methylethanolamine + S-adenosyl-L-methionine = 1,2-di-(9Z,12Z,15Z-octadecatrienoyl)-sn-glycero-3-phospho-N,N-dimethylethanolamine + S-adenosyl-L-homocysteine + H(+). It carries out the reaction 1,2-di-(9Z,12Z,15Z-octadecatrienoyl)-sn-glycero-3-phospho-N,N-dimethylethanolamine + S-adenosyl-L-methionine = 1,2-di-(9Z,12Z,15Z-octadecatrienoyl)-sn-glycero-3-phosphocholine + S-adenosyl-L-homocysteine + H(+). The catalysed reaction is 1-hexadecanoyl-2-(4Z,7Z,10Z,13Z,16Z,19Z-docosahexaenoyl)-sn-glycero-3-phosphoethanolamine + S-adenosyl-L-methionine = 1-hexadecanoyl-2-(4Z,7Z,10Z,13Z,16Z,19Z-docosahexaenoyl)-sn-glycero-3-phospho-N-methylethanolamine + S-adenosyl-L-homocysteine + H(+). It catalyses the reaction 1-hexadecanoyl-2-(4Z,7Z,10Z,13Z,16Z,19Z-docosahexaenoyl)-sn-glycero-3-phospho-N-methylethanolamine + S-adenosyl-L-methionine = 1-hexadecanoyl-2-(4Z,7Z,10Z,13Z,16Z,19Z-docosahexaenoyl)-sn-glycero-3-phospho-N,N-dimethylethanolamine + S-adenosyl-L-homocysteine + H(+). The enzyme catalyses 1-hexadecanoyl-2-(4Z,7Z,10Z,13Z,16Z,19Z-docosahexaenoyl)-sn-glycero-3-phospho-N,N-dimethylethanolamine + S-adenosyl-L-methionine = 1-hexadecanoyl-2-(4Z,7Z,10Z,13Z,16Z,19Z-docosahexaenoyl)-sn-glycero-3-phosphocholine + S-adenosyl-L-homocysteine + H(+). It functions in the pathway phospholipid metabolism; phosphatidylcholine biosynthesis. Its function is as follows. Catalyzes the three sequential steps of the methylation pathway for the biosynthesis of phosphatidylcholine, a critical and essential component for membrane structure. Uses S-adenosylmethionine (S-adenosyl-L-methionine, SAM or AdoMet) as the methyl group donor for the methylation of phosphatidylethanolamine (1,2-diacyl-sn-glycero-3-phosphoethanolamine, PE) to phosphatidylmonomethylethanolamine (1,2-diacyl-sn-glycero-3-phospho-N-methylethanolamine, PMME), PMME to phosphatidyldimethylethanolamine (1,2-diacyl-sn-glycero-3-phospho-N,N-dimethylethanolamine, PDME), and PDME to phosphatidylcholine (1,2-diacyl-sn-glycero-3-phosphocholine, PC), producing S-adenosyl-L-homocysteine in each step. The polypeptide is Phosphatidylethanolamine N-methyltransferase (Mus musculus (Mouse)).